Reading from the N-terminus, the 302-residue chain is Syntaxin-17 (302 aa).

An N-acetylserine modification is found at Ser-2. The Cytoplasmic segment spans residues 2-228; it reads SEDEEKVKLR…KNLGKAAKYK (227 aa). N6-acetyllysine is present on Lys-41. The stretch at 53–123 forms a coiled coil; that stretch reads EEHINAGRTV…EELKKQFNDE (71 aa). Phosphotyrosine; by ABL1 is present on Tyr-157. The t-SNARE coiled-coil homology domain occupies 162–224; that stretch reads IPQDQNAAES…EEGTKNLGKA (63 aa). A helical transmembrane segment spans residues 229–249; it reads LAALPVAGALIGGMVGGPIGL. Residues 229–275 are necessary and sufficient for localization to autophagosome; that stretch reads LAALPVAGALIGGMVGGPIGLLAGFKVAGIAAALGGGVLGFTGGKLI. The Lumenal segment spans residues 250–254; the sequence is LAGFK. Residues 255-275 form a helical membrane-spanning segment; that stretch reads VAGIAAALGGGVLGFTGGKLI. At 276-302 the chain is on the cytoplasmic side; sequence QRKKQKMMEKLTSSCPDLPSQTDKKCS. Ser-289 bears the Phosphoserine mark. An Endoplasmic reticulum retention signal motif is present at residues 299–302; it reads KKCS.

The protein belongs to the syntaxin family. As to quaternary structure, forms a SNARE complex composed of VAMP8, SNAP29 and STX17 involved in fusion of autophagosome with lysosome. Interacts with VAMP7 and VTI1B. Probably interacts with BET1, SCFD1 and SEC22B. Interacts with PTPN2 and ABL1; involved in STX17 phosphorylation. Interacts with COPB1. Interacts with TMED9 and TMED10; the interaction is direct. Interacts with ATG14. Interacts with RUBCNL/PACER; promoting targeting of RUBCNL/PACER to autophagosome. Interacts with VAMP8, SNAP29, VPS39 and VPS41; these interactions are increased in the absence of TMEM39A. Interacts with IRGM; promoting STX17 recruitment to autophagosomes. Interacts with ATG8 proteins GABARAP and MAP1LC3B. Interacts with RNF115; this interaction enhances STX17 stability which in turn promotes autophagosome maturation. Interacts with RAB39A (GTP-bound); the interaction promotes autophagosome-lysosome membrane fusion driven by STX17-SNAP29-VAMP8. Interacts with RAB39B; the interaction may promote a different fonction in autophagy as compared with RAB39A. (Microbial infection) The interactions with VAMP8, SNAP29 and VPS41 are decreased in presence of SARS coronavirus-2/SARS-CoV-2 ORF3A protein. Phosphorylated at Tyr-157 probably by ABL1. Dephosphorylation by PTPN2; regulates exit from the endoplasmic reticulum. In terms of processing, (Microbial infection) Cleaved by the L.pneumophila serine protease Lpg1137, impairing endoplasmic reticulum-mitochondria communication, leading to inhibit autophagy.

The protein resides in the endoplasmic reticulum membrane. It is found in the smooth endoplasmic reticulum membrane. It localises to the endoplasmic reticulum-Golgi intermediate compartment membrane. The protein localises to the cytoplasmic vesicle. Its subcellular location is the autophagosome membrane. The protein resides in the COPII-coated vesicle membrane. It is found in the cytoplasm. It localises to the cytosol. The protein localises to the mitochondrion membrane. Its subcellular location is the autolysosome membrane. Its function is as follows. SNAREs, soluble N-ethylmaleimide-sensitive factor-attachment protein receptors, are essential proteins for fusion of cellular membranes. SNAREs localized on opposing membranes assemble to form a trans-SNARE complex, an extended, parallel four alpha-helical bundle that drives membrane fusion. STX17 is a SNARE of the autophagosome involved in autophagy through the direct control of autophagosome membrane fusion with the lysosome membrane. May also play a role in the early secretory pathway where it may maintain the architecture of the endoplasmic reticulum-Golgi intermediate compartment/ERGIC and Golgi and/or regulate transport between the endoplasmic reticulum, the ERGIC and the Golgi. This chain is Syntaxin-17, found in Homo sapiens (Human).